Reading from the N-terminus, the 413-residue chain is PCI domain-containing protein 2 homolog (413 aa).

The 182-residue stretch at 222–403 (VAYNYFLGRK…QKLVISKTNA (182 aa)) folds into the PCI domain.

It belongs to the CSN12 family.

This chain is PCI domain-containing protein 2 homolog, found in Caenorhabditis briggsae.